Here is a 758-residue protein sequence, read N- to C-terminus: 5-methyltetrahydropteroyltriglutamate--homocysteine methyltransferase (758 aa).

Residues 16 to 19 and lysine 116 contribute to the 5-methyltetrahydropteroyltri-L-glutamate site; that span reads RELK. L-homocysteine is bound by residues 436–438 and glutamate 489; that span reads IGS. Residues 436-438 and glutamate 489 each bind L-methionine; that span reads IGS. 5-methyltetrahydropteroyltri-L-glutamate is bound by residues 520–521 and tryptophan 566; that span reads RC. An L-homocysteine-binding site is contributed by aspartate 604. Aspartate 604 is a binding site for L-methionine. Glutamate 610 contributes to the 5-methyltetrahydropteroyltri-L-glutamate binding site. Positions 646, 648, and 670 each coordinate Zn(2+). The Proton donor role is filled by histidine 699. Zn(2+) is bound at residue cysteine 731.

Belongs to the vitamin-B12 independent methionine synthase family. Requires Zn(2+) as cofactor.

It catalyses the reaction 5-methyltetrahydropteroyltri-L-glutamate + L-homocysteine = tetrahydropteroyltri-L-glutamate + L-methionine. Its pathway is amino-acid biosynthesis; L-methionine biosynthesis via de novo pathway; L-methionine from L-homocysteine (MetE route): step 1/1. Functionally, catalyzes the transfer of a methyl group from 5-methyltetrahydrofolate to homocysteine resulting in methionine formation. The protein is 5-methyltetrahydropteroyltriglutamate--homocysteine methyltransferase of Xylella fastidiosa (strain M12).